The primary structure comprises 749 residues: Probable serine/threonine-protein kinase drkC (749 aa).

Positions 1 to 31 (MIIINKYIRMNKIAILFSFFILICCTGYSIS) are cleaved as a signal peptide. The Extracellular segment spans residues 32–423 (YKINGINENK…TSPNYQKIIY (392 aa)). Residues 124 to 153 (DRTDQVSTSSSSSSFSEENKKSSSDDSAPA) form a disordered region. A compositionally biased stretch (low complexity) spans 130–139 (STSSSSSSFS). N-linked (GlcNAc...) asparagine glycosylation is found at Asn-157, Asn-189, Asn-283, Asn-358, Asn-373, Asn-381, and Asn-397. The helical transmembrane segment at 424–444 (IVVGVGIAVLLIIAVGIYFII) threads the bilayer. Topologically, residues 445 to 749 (RLRIKNKRLN…QEIVKRLEAM (305 aa)) are cytoplasmic. Residues 491–749 (IVVQNRIGRG…QEIVKRLEAM (259 aa)) enclose the Protein kinase domain. Residues 497–505 (IGRGSCAEV) and Lys-518 each bind ATP. The active-site Proton acceptor is Asp-615.

This sequence belongs to the protein kinase superfamily. TKL Ser/Thr protein kinase family.

It localises to the membrane. It catalyses the reaction L-seryl-[protein] + ATP = O-phospho-L-seryl-[protein] + ADP + H(+). It carries out the reaction L-threonyl-[protein] + ATP = O-phospho-L-threonyl-[protein] + ADP + H(+). In Dictyostelium discoideum (Social amoeba), this protein is Probable serine/threonine-protein kinase drkC (drkC).